The primary structure comprises 687 residues: DNA ligase (687 aa).

NAD(+) contacts are provided by residues 34–38 (DAEYD), 83–84 (SL), and Glu-117. Catalysis depends on Lys-119, which acts as the N6-AMP-lysine intermediate. NAD(+) contacts are provided by Arg-140, Glu-182, Lys-298, and Lys-322. Zn(2+) is bound by residues Cys-416, Cys-419, Cys-434, and Cys-439. A BRCT domain is found at 609 to 687 (EARGPFAGKT…EEEFVRLLKE (79 aa)).

The protein belongs to the NAD-dependent DNA ligase family. LigA subfamily. The cofactor is Mg(2+). Requires Mn(2+) as cofactor.

The catalysed reaction is NAD(+) + (deoxyribonucleotide)n-3'-hydroxyl + 5'-phospho-(deoxyribonucleotide)m = (deoxyribonucleotide)n+m + AMP + beta-nicotinamide D-nucleotide.. Its function is as follows. DNA ligase that catalyzes the formation of phosphodiester linkages between 5'-phosphoryl and 3'-hydroxyl groups in double-stranded DNA using NAD as a coenzyme and as the energy source for the reaction. It is essential for DNA replication and repair of damaged DNA. The chain is DNA ligase from Anaeromyxobacter sp. (strain K).